A 286-amino-acid chain; its full sequence is Putative sugar uptake protein lmo0176 (286 aa).

Helical transmembrane passes span 4–26 (MIAL…FGGS), 33–55 (GMTL…VYTL), 114–136 (LRII…TSYA), 149–167 (GLIT…VVLI), 177–194 (AILP…IMTH), 207–226 (LLLT…MVHA), 230–252 (VGVA…GGII), and 264–283 (LFVI…IGVA).

This sequence belongs to the GRP transporter (TC 2.A.7.5) family.

The protein resides in the cell membrane. This Listeria monocytogenes serovar 1/2a (strain ATCC BAA-679 / EGD-e) protein is Putative sugar uptake protein lmo0176.